Consider the following 301-residue polypeptide: GTPase Era (301 aa).

Residues 7–175 (YCGFIAIVGR…AAIVRKHLPE (169 aa)) form the Era-type G domain. The G1 stretch occupies residues 15–22 (GRPNVGKS). 15–22 (GRPNVGKS) provides a ligand contact to GTP. Residues 41–45 (QTTRH) form a G2 region. The tract at residues 62 to 65 (DTPG) is G3. GTP is bound by residues 62 to 66 (DTPGL) and 124 to 127 (NKVD). Residues 124-127 (NKVD) form a G4 region. The segment at 154-156 (ISA) is G5. A KH type-2 domain is found at 206–283 (LGAELPYSVT…HLELWVKVKS (78 aa)).

The protein belongs to the TRAFAC class TrmE-Era-EngA-EngB-Septin-like GTPase superfamily. Era GTPase family. In terms of assembly, monomer.

The protein resides in the cytoplasm. It is found in the cell inner membrane. Its function is as follows. An essential GTPase that binds both GDP and GTP, with rapid nucleotide exchange. Plays a role in 16S rRNA processing and 30S ribosomal subunit biogenesis and possibly also in cell cycle regulation and energy metabolism. The sequence is that of GTPase Era from Escherichia coli O1:K1 / APEC.